The following is a 230-amino-acid chain: Uracil phosphoribosyltransferase (230 aa).

Position 38–42 (38–42 (KGLVK)) interacts with GTP. 5-phospho-alpha-D-ribose 1-diphosphate is bound by residues R87, R112, and 140 to 148 (DPMIATGST). Residues I204 and 209–211 (GDA) contribute to the uracil site. A 5-phospho-alpha-D-ribose 1-diphosphate-binding site is contributed by D210.

It belongs to the UPRTase family. It depends on Mg(2+) as a cofactor.

The catalysed reaction is UMP + diphosphate = 5-phospho-alpha-D-ribose 1-diphosphate + uracil. It functions in the pathway pyrimidine metabolism; UMP biosynthesis via salvage pathway; UMP from uracil: step 1/1. Allosterically activated by GTP. In terms of biological role, catalyzes the conversion of uracil and 5-phospho-alpha-D-ribose 1-diphosphate (PRPP) to UMP and diphosphate. This is Uracil phosphoribosyltransferase from Thermococcus kodakarensis (strain ATCC BAA-918 / JCM 12380 / KOD1) (Pyrococcus kodakaraensis (strain KOD1)).